The following is a 403-amino-acid chain: Na(+)-translocating NADH-quinone reductase subunit B (403 aa).

9 consecutive transmembrane segments (helical) span residues 56 to 76, 121 to 141, 164 to 184, 225 to 245, 260 to 280, 287 to 307, 312 to 332, 348 to 368, and 371 to 391; these read MMIIVWLCTFPAMFFGMYNVG, AYFLPVYLTTFIVGGFWEVLF, LPPSVPLWQVALGISFGVVLG, GFAGATSLSLAAAGGVDNILG, GSMGETSTLAIFIGGAVLLLT, IVAGVMLGMIAMSYLFNAIGS, MFAMPWYWHLVTGGFAFGMIF, WLFGALIGVMVMLIRVVNPAF, and GMMLAILFANLFAPLIDHFVV. Threonine 230 carries the FMN phosphoryl threonine modification.

Belongs to the NqrB/RnfD family. Composed of six subunits; NqrA, NqrB, NqrC, NqrD, NqrE and NqrF. Requires FMN as cofactor.

The protein localises to the cell inner membrane. It catalyses the reaction a ubiquinone + n Na(+)(in) + NADH + H(+) = a ubiquinol + n Na(+)(out) + NAD(+). NQR complex catalyzes the reduction of ubiquinone-1 to ubiquinol by two successive reactions, coupled with the transport of Na(+) ions from the cytoplasm to the periplasm. NqrA to NqrE are probably involved in the second step, the conversion of ubisemiquinone to ubiquinol. The polypeptide is Na(+)-translocating NADH-quinone reductase subunit B (Pseudomonas paraeruginosa (strain DSM 24068 / PA7) (Pseudomonas aeruginosa (strain PA7))).